Reading from the N-terminus, the 238-residue chain is Pyridoxine 5'-phosphate synthase (238 aa).

Asn-7 contacts 3-amino-2-oxopropyl phosphate. Position 9–10 (9–10 (DH)) interacts with 1-deoxy-D-xylulose 5-phosphate. Residue Arg-18 participates in 3-amino-2-oxopropyl phosphate binding. Catalysis depends on His-43, which acts as the Proton acceptor. 2 residues coordinate 1-deoxy-D-xylulose 5-phosphate: Arg-45 and His-50. The active-site Proton acceptor is Glu-70. Thr-100 contacts 1-deoxy-D-xylulose 5-phosphate. His-190 serves as the catalytic Proton donor. 3-amino-2-oxopropyl phosphate is bound by residues Gly-191 and 212–213 (GH).

The protein belongs to the PNP synthase family. As to quaternary structure, homooctamer; tetramer of dimers.

Its subcellular location is the cytoplasm. It carries out the reaction 3-amino-2-oxopropyl phosphate + 1-deoxy-D-xylulose 5-phosphate = pyridoxine 5'-phosphate + phosphate + 2 H2O + H(+). It participates in cofactor biosynthesis; pyridoxine 5'-phosphate biosynthesis; pyridoxine 5'-phosphate from D-erythrose 4-phosphate: step 5/5. Its function is as follows. Catalyzes the complicated ring closure reaction between the two acyclic compounds 1-deoxy-D-xylulose-5-phosphate (DXP) and 3-amino-2-oxopropyl phosphate (1-amino-acetone-3-phosphate or AAP) to form pyridoxine 5'-phosphate (PNP) and inorganic phosphate. In Prochlorococcus marinus subsp. pastoris (strain CCMP1986 / NIES-2087 / MED4), this protein is Pyridoxine 5'-phosphate synthase.